The sequence spans 164 residues: Peptidyl-prolyl cis-trans isomerase B (164 aa).

Positions 1 to 162 (MVTFHTNHGD…EDVIIESVTV (162 aa)) constitute a PPIase cyclophilin-type domain.

The protein belongs to the cyclophilin-type PPIase family.

Its subcellular location is the cytoplasm. It catalyses the reaction [protein]-peptidylproline (omega=180) = [protein]-peptidylproline (omega=0). Its activity is regulated as follows. Inhibition by cyclosporin A with a Ki of 25 to 50 mu-mol, a concentration 1000-fold higher than that required for eukaryotic PPIases. Its function is as follows. PPIases accelerate the folding of proteins. It catalyzes the cis-trans isomerization of proline imidic peptide bonds in oligopeptides. The polypeptide is Peptidyl-prolyl cis-trans isomerase B (ppiB) (Escherichia coli (strain K12)).